The primary structure comprises 449 residues: UDP-N-acetylglucosamine 1-carboxyvinyltransferase (449 aa).

Residues 1–12 (MQVTVNEHDAVE) are compositionally biased toward basic and acidic residues. The interval 1-30 (MQVTVNEHDAVERVATATPAGNREAHAHGT) is disordered. Phosphoenolpyruvate is bound at residue 51-52 (KN). A UDP-N-acetyl-alpha-D-glucosamine-binding site is contributed by arginine 121. Residue cysteine 145 is the Proton donor of the active site. Cysteine 145 bears the 2-(S-cysteinyl)pyruvic acid O-phosphothioketal mark. UDP-N-acetyl-alpha-D-glucosamine is bound by residues 150 to 154 (RPVDQ), aspartate 333, and isoleucine 355.

This sequence belongs to the EPSP synthase family. MurA subfamily.

Its subcellular location is the cytoplasm. The enzyme catalyses phosphoenolpyruvate + UDP-N-acetyl-alpha-D-glucosamine = UDP-N-acetyl-3-O-(1-carboxyvinyl)-alpha-D-glucosamine + phosphate. Its pathway is cell wall biogenesis; peptidoglycan biosynthesis. Cell wall formation. Adds enolpyruvyl to UDP-N-acetylglucosamine. This Burkholderia pseudomallei (strain 1710b) protein is UDP-N-acetylglucosamine 1-carboxyvinyltransferase.